A 1242-amino-acid chain; its full sequence is Reverse gyrase 1 (1242 aa).

Residues 6-46 form an RG N-terminal-type zinc finger; sequence KVPPSIYTRSCPNCGGNISSQRLFNGSVCESCLKDDREFSN. Zn(2+) is bound by residues cysteine 16, cysteine 19, cysteine 34, and cysteine 37. Residues glutamine 93 and 110–117 contribute to the ATP site; that span reads APPGLGKT. A Helicase ATP-binding domain is found at 97–298; the sequence is TIRFLRGESF…SLMGFRPGSS (202 aa). The DEAD box signature appears at 214 to 217; sequence DDVD. Residues 615–1242 form a topoisomerase I region; that stretch reads LSVKTTLFIV…ELYNEIQTIS (628 aa). Positions 619 to 785 constitute a Toprim domain; the sequence is TTLFIVESPN…NIKRAEFHEV (167 aa). Glutamate 625 serves as a coordination point for Mg(2+). The segment at 703–731 adopts an RG C-terminal-type; atypical zinc-finger fold; the sequence is IKKCEKGHQIVKDLSQNKCPICGSRIVTD. 4 residues coordinate Zn(2+): cysteine 706, histidine 710, cysteine 721, and cysteine 724. Aspartate 754 lines the Mg(2+) pocket. Positions 801–1242 constitute a Topo IA-type catalytic domain; that stretch reads NDNLVKSQIV…ELYNEIQTIS (442 aa). Residue tyrosine 965 is the O-(5'-phospho-DNA)-tyrosine intermediate of the active site.

The protein in the N-terminal section; belongs to the DEAD box helicase family. DDVD subfamily. In the C-terminal section; belongs to the type IA topoisomerase family. Monomer. The cofactor is Zn(2+). It depends on Mg(2+) as a cofactor.

The protein localises to the cytoplasm. The catalysed reaction is ATP + H2O = ADP + phosphate + H(+). Its activity is regulated as follows. At least one of the two reverse gyrase proteins is inhibited by actinomycin D. Highly sensitive to NaCl concentrations, maximal positive supercoiling is observed with 10 mM NaCl; as NaCl rises, supercoiling decreases. At 300 mM NaCl relaxes but does not introduce positive supercoils into negatively supercoiled substrate, at 400 mM NaCl does not relax DNA. Modifies the topological state of DNA by introducing positive supercoils in an ATP-dependent process. Increases the linking number in steps of +1. Involved in homeostatic control of DNA topology in balance with type II topoisomerase 6 (TopoVI); levels of TopoVI are constant at 80 and 88 degrees Celsius and TopoVI is probably less active at 88 degrees (characterized enzyme is from S.shibatae B12), so reverse gyrase mediates most of the fine-tuning of DNA topology. Changes the DNA linking number step-by-step in a distributive manner. At low protein to DNA ratios mostly relaxes negatively supercoiled substrate, as ratios rise more positive supercoils are introduced. At 90 degrees Celsius introduces 19 positive supercoils into pTZ18R DNA (probably 2860 bp), less than TopR2. Relaxes negatively supercoiled DNA in the absence of ATP. It cleaves transiently a single DNA strand and remains covalently bound to the 5' DNA end through a tyrosine residue. May be involved in DNA damage response. Its activity is inhibited by the DNA-binding protein 7d (Sso7d), suggesting that the Sso7d activity might counteract the overwinding effect of reverse gyrase. Functionally, resolves 4-way Holliday junctions (HJ) with 20 bases in each arm in vitro, distorting the junction. Very high protein levels are required, but total enzyme content of the cell (there are 2 reverse gyrases in this organism) is estimated to be 20-200 molecules/cell. HJ resolution does not require either ATPase activity or the active tyrosine. The individual domains do not resolve HJs but do so when mixed. Also unwinds a fork substrate. In terms of biological role, there are 2 genes for this protein in the cell. During exponential growth this is the less expressed isoform (about 52 molecules per cell at 80 degrees Celsius, about 28 molecules at 88 degrees Celsius); this isoform is more active at higher temperature. Grows actively at both 80 and 88 degrees Celsius; survives a long exposure at 45 degrees Celsius without DNA replication or cell division occurring. Experiments using whole cell extracts do not distinguish which isoform is present, the results are probably a mixture of the two forms. The chain is Reverse gyrase 1 from Saccharolobus solfataricus (strain ATCC 35092 / DSM 1617 / JCM 11322 / P2) (Sulfolobus solfataricus).